A 428-amino-acid polypeptide reads, in one-letter code: GTPase Obg (428 aa).

The Obg domain maps to 1-158 (MFVDQVKVYV…RDVILELKVL (158 aa)). The segment at 118–145 (KGGRGGRGNSRFATPANPAPQLSENGEP) is disordered. In terms of domain architecture, OBG-type G spans 159–329 (ADVGLVGFPS…LLFEIANQLE (171 aa)). Residues 165 to 172 (GFPSVGKS), 190 to 194 (FTTLV), 212 to 215 (DLPG), 282 to 285 (NKMD), and 310 to 312 (SAI) each bind GTP. The Mg(2+) site is built by S172 and T192. The region spanning 350–428 (RFDEGDAPFE…LLEFEFEFID (79 aa)) is the OCT domain.

The protein belongs to the TRAFAC class OBG-HflX-like GTPase superfamily. OBG GTPase family. In terms of assembly, monomer. Mg(2+) is required as a cofactor.

Its subcellular location is the cytoplasm. In terms of biological role, an essential GTPase which binds GTP, GDP and possibly (p)ppGpp with moderate affinity, with high nucleotide exchange rates and a fairly low GTP hydrolysis rate. Plays a role in control of the cell cycle, stress response, ribosome biogenesis and in those bacteria that undergo differentiation, in morphogenesis control. This Bacillus pumilus (strain SAFR-032) protein is GTPase Obg.